We begin with the raw amino-acid sequence, 246 residues long: Sensory transduction protein LytT (246 aa).

The region spanning 3-117 is the Response regulatory domain; the sequence is KVLVVDDEML…RIVQTLKKYK (115 aa). Asp54 carries the 4-aspartylphosphate modification. The HTH LytTR-type domain occupies 142–246; it reads LALPIEESIV…AKELKKLLRI (105 aa).

Phosphorylated by LytS.

The protein localises to the cytoplasm. Member of the two-component regulatory system LytS/LytT that probably regulates genes involved in cell wall metabolism. The polypeptide is Sensory transduction protein LytT (lytT) (Bacillus anthracis).